The primary structure comprises 346 residues: MGTSSDPIQDGSDEQQKRSEIYTYEAPWHIYAMNWSVRRDKKYRLAITSLLEQYPNRVEIVQLDESNGEIRSDPNLSFEHPYPPTKTIFIPDKECQRPDLLATSSDFLRLWRIADDHSRVELKSCLNSNKNSEFCGPLTSFDWNEAEPRRIGTSSTDTTCTIWDIEREAVDTQLIAHDKEVFDIAWGGVGVFASVSADGSVRVFDLRDKEHSTIIYESSEPDTPLVRLGWNKQDPRYMATIIMDSAKVVVLDIRFPALPVVELQRHQASVNAIAWAPHSSCHICTAGDDSQALIWDISSMGQHVEGGLDPILAYTAGAEIEQLQWSSSQPDWVAIAFSTKLQILRV.

Met-1 carries the N-acetylmethionine modification. 4 WD repeats span residues 79-121, 133-173, 176-214, and 265-305; these read EHPY…SRVE, EFCG…VDTQ, AHDK…HSTI, and RHQA…QHVE.

It localises to the nucleus. Functionally, clock protein essential for the proper expression phase and period length of both the oscillator and output genes known to participate in photoperiod sensing. Required for the expression of APRR9, APRR7, and APRR5. Regulated by APRR9 and APRR7 at the transcriptional level, indicating the existence of a positive feedback loop within the circadian clock. May function to delay the expression of the morning genes until dawn approaches. The sequence is that of WD repeat-containing protein LWD1 (LWD1) from Arabidopsis thaliana (Mouse-ear cress).